A 156-amino-acid chain; its full sequence is SsrA-binding protein (156 aa).

The segment at 127 to 156 (GKKKYDKREDLKKKDAKRDVDRAMRDRQKY) is disordered. Residues 132–156 (DKREDLKKKDAKRDVDRAMRDRQKY) are compositionally biased toward basic and acidic residues.

This sequence belongs to the SmpB family.

It localises to the cytoplasm. Required for rescue of stalled ribosomes mediated by trans-translation. Binds to transfer-messenger RNA (tmRNA), required for stable association of tmRNA with ribosomes. tmRNA and SmpB together mimic tRNA shape, replacing the anticodon stem-loop with SmpB. tmRNA is encoded by the ssrA gene; the 2 termini fold to resemble tRNA(Ala) and it encodes a 'tag peptide', a short internal open reading frame. During trans-translation Ala-aminoacylated tmRNA acts like a tRNA, entering the A-site of stalled ribosomes, displacing the stalled mRNA. The ribosome then switches to translate the ORF on the tmRNA; the nascent peptide is terminated with the 'tag peptide' encoded by the tmRNA and targeted for degradation. The ribosome is freed to recommence translation, which seems to be the essential function of trans-translation. The chain is SsrA-binding protein from Exiguobacterium sp. (strain ATCC BAA-1283 / AT1b).